The following is a 293-amino-acid chain: Rhomboid-like protease 1 (293 aa).

The tract at residues 18 to 40 (EHTPLYNAETGSRDSDSTSSGGA) is disordered. 6 helical membrane passes run 62-82 (VVLA…CLDT), 112-132 (LLLP…VFFQ), 148-168 (FTGL…TAFF), 174-194 (VGAS…MALT), 217-237 (LLMF…GGLL), and 262-282 (AAAI…LYAV). The active-site Nucleophile is Ser-177. Residue His-232 is part of the active site.

This sequence belongs to the peptidase S54 family.

It is found in the cytoplasmic vesicle. It localises to the secretory vesicle. Its subcellular location is the microneme membrane. It catalyses the reaction Cleaves type-1 transmembrane domains using a catalytic dyad composed of serine and histidine that are contributed by different transmembrane domains.. In terms of biological role, serine protease involved in intramembrane proteolysis and the subsequent release of polypeptides from their membrane anchors. Has no detectable activity towards MIC2. The protein is Rhomboid-like protease 1 (ROM1) of Toxoplasma gondii.